The chain runs to 534 residues: Benzaldehyde dehydrogenase, mitochondrial (534 aa).

A mitochondrion-targeting transit peptide spans 1–29 (MAAHRFSSLLSRSVPLLSRGGKQSYLGRG). NAD(+) contacts are provided by residues 199–202 (IPWN), 225–228 (KTAE), 258–259 (GP), 278–279 (GS), and 301–303 (ELG). Glutamate 301 acts as the Proton acceptor in catalysis. Residue cysteine 335 is the Nucleophile of the active site. NAD(+) contacts are provided by residues 381–385 (DQFEK) and 432–434 (EIF).

It belongs to the aldehyde dehydrogenase family. As to quaternary structure, homotetramer. In terms of tissue distribution, expressed predominantly in the upper and lower flower petal lobes, and, at low levels, in flower tubes, pistils, stamens and sepals.

The protein localises to the mitochondrion. The catalysed reaction is an aldehyde + NAD(+) + H2O = a carboxylate + NADH + 2 H(+). It catalyses the reaction acetaldehyde + NAD(+) + H2O = acetate + NADH + 2 H(+). The enzyme catalyses benzaldehyde + NAD(+) + H2O = benzoate + NADH + 2 H(+). It carries out the reaction 2-phenylacetaldehyde + NAD(+) + H2O = 2-phenylacetate + NADH + 2 H(+). Its pathway is aromatic compound metabolism. With respect to regulation, inhibited by disulfiram. Component of the floral volatile benzenoid/phenylpropanoid (FVBP) biosynthetic pathway. Catalyzes the oxidation of benzaldehyde to benzoic acid (BA). Capable of oxidizing a broad spectrum of aliphatic aldehydes; increased carbon chain length results in a decrease in its efficiency. The sequence is that of Benzaldehyde dehydrogenase, mitochondrial from Antirrhinum majus (Garden snapdragon).